A 227-amino-acid chain; its full sequence is Cytochrome c oxidase subunit 2 (227 aa).

The Mitochondrial intermembrane portion of the chain corresponds to 1 to 14 (MAHSFQLGFQDATS). A helical membrane pass occupies residues 15-45 (PIMEELLHFHDHTLMIVFLISSLVLYIITLM). The Mitochondrial matrix portion of the chain corresponds to 46–59 (LTTKLTHTSTMDAQ). A helical membrane pass occupies residues 60–87 (EVETVWTILPAIILILIALPSLRILYLM). At 88-227 (DEINTPSLTV…HFENWSTSMI (140 aa)) the chain is on the mitochondrial intermembrane side. The Cu cation site is built by His-161, Cys-196, Glu-198, Cys-200, His-204, and Met-207. Glu-198 is a Mg(2+) binding site.

The protein belongs to the cytochrome c oxidase subunit 2 family. Component of the cytochrome c oxidase (complex IV, CIV), a multisubunit enzyme composed of 14 subunits. The complex is composed of a catalytic core of 3 subunits MT-CO1, MT-CO2 and MT-CO3, encoded in the mitochondrial DNA, and 11 supernumerary subunits COX4I, COX5A, COX5B, COX6A, COX6B, COX6C, COX7A, COX7B, COX7C, COX8 and NDUFA4, which are encoded in the nuclear genome. The complex exists as a monomer or a dimer and forms supercomplexes (SCs) in the inner mitochondrial membrane with NADH-ubiquinone oxidoreductase (complex I, CI) and ubiquinol-cytochrome c oxidoreductase (cytochrome b-c1 complex, complex III, CIII), resulting in different assemblies (supercomplex SCI(1)III(2)IV(1) and megacomplex MCI(2)III(2)IV(2)). Found in a complex with TMEM177, COA6, COX18, COX20, SCO1 and SCO2. Interacts with TMEM177 in a COX20-dependent manner. Interacts with COX20. Interacts with COX16. Cu cation is required as a cofactor.

The protein resides in the mitochondrion inner membrane. The catalysed reaction is 4 Fe(II)-[cytochrome c] + O2 + 8 H(+)(in) = 4 Fe(III)-[cytochrome c] + 2 H2O + 4 H(+)(out). Functionally, component of the cytochrome c oxidase, the last enzyme in the mitochondrial electron transport chain which drives oxidative phosphorylation. The respiratory chain contains 3 multisubunit complexes succinate dehydrogenase (complex II, CII), ubiquinol-cytochrome c oxidoreductase (cytochrome b-c1 complex, complex III, CIII) and cytochrome c oxidase (complex IV, CIV), that cooperate to transfer electrons derived from NADH and succinate to molecular oxygen, creating an electrochemical gradient over the inner membrane that drives transmembrane transport and the ATP synthase. Cytochrome c oxidase is the component of the respiratory chain that catalyzes the reduction of oxygen to water. Electrons originating from reduced cytochrome c in the intermembrane space (IMS) are transferred via the dinuclear copper A center (CU(A)) of subunit 2 and heme A of subunit 1 to the active site in subunit 1, a binuclear center (BNC) formed by heme A3 and copper B (CU(B)). The BNC reduces molecular oxygen to 2 water molecules using 4 electrons from cytochrome c in the IMS and 4 protons from the mitochondrial matrix. The polypeptide is Cytochrome c oxidase subunit 2 (MT-CO2) (Cephalopachus bancanus (Western tarsier)).